Here is a 465-residue protein sequence, read N- to C-terminus: Branched-chain amino acid permease BcaP (465 aa).

Helical transmembrane passes span L35–V55, A57–L77, L103–V123, S133–V153, L159–I179, I188–V208, F216–I236, G258–T278, V305–L325, P355–L375, K380–L400, C413–L432, and V437–Y456.

This sequence belongs to the amino acid-polyamine-organocation (APC) superfamily.

It is found in the cell membrane. With respect to regulation, isoleucine uptake is efficiently reduced in the presence of 100-fold excess valine, leucine, alanine, threonine, serine, cysteine, asparagine, and a nonproteinaceous amino acid 4-azaleucine. Functionally, branched-chain amino acid transport system which is involved in the uptake of isoleucine, valine and probably leucine. Can also transport threonine, and is active as a minor serine permease. May be an amino acid permease of rather broad specificity, because several amino acids, albeit at 100-fold excess, are able to prevent isoleucine uptake. Probably does not transport methionine. Together with BraB and BrnQ, plays an important role in the activation of CodY, a branched-chain amino acid-responsive transcriptional regulator that controls the expression of several dozen transcription units in B.subtilis. This is Branched-chain amino acid permease BcaP from Bacillus subtilis (strain 168).